The chain runs to 273 residues: Large ribosomal subunit protein uL2 (273 aa).

Residues 221–262 (RGTAMNPVDHPHGGGEGRNFGKHPVTPWGVQTKGKKTRHNKR) are disordered. Residues 253–262 (KGKKTRHNKR) are compositionally biased toward basic residues.

It belongs to the universal ribosomal protein uL2 family. As to quaternary structure, part of the 50S ribosomal subunit. Forms a bridge to the 30S subunit in the 70S ribosome.

Functionally, one of the primary rRNA binding proteins. Required for association of the 30S and 50S subunits to form the 70S ribosome, for tRNA binding and peptide bond formation. It has been suggested to have peptidyltransferase activity; this is somewhat controversial. Makes several contacts with the 16S rRNA in the 70S ribosome. The protein is Large ribosomal subunit protein uL2 of Haemophilus ducreyi (strain 35000HP / ATCC 700724).